Here is a 269-residue protein sequence, read N- to C-terminus: 5'-nucleotidase SurE (269 aa).

A divalent metal cation contacts are provided by aspartate 11, aspartate 12, serine 43, and asparagine 101.

This sequence belongs to the SurE nucleotidase family. The cofactor is a divalent metal cation.

Its subcellular location is the cytoplasm. It carries out the reaction a ribonucleoside 5'-phosphate + H2O = a ribonucleoside + phosphate. Nucleotidase that shows phosphatase activity on nucleoside 5'-monophosphates. This Prochlorococcus marinus subsp. pastoris (strain CCMP1986 / NIES-2087 / MED4) protein is 5'-nucleotidase SurE.